The primary structure comprises 256 residues: Fructose-1,6-bisphosphatase/inositol-1-monophosphatase (256 aa).

Residues Glu67, Asp83, Leu85, and Asp86 each contribute to the Mg(2+) site. Substrate contacts are provided by residues 86 to 88, Arg170, Ile175, and Arg194; that span reads DGS. Asp201 lines the Mg(2+) pocket.

Belongs to the inositol monophosphatase superfamily. FBPase class 4 family. Homodimer. Mg(2+) is required as a cofactor.

The catalysed reaction is beta-D-fructose 1,6-bisphosphate + H2O = beta-D-fructose 6-phosphate + phosphate. It carries out the reaction a myo-inositol phosphate + H2O = myo-inositol + phosphate. In terms of biological role, phosphatase with broad specificity; it can dephosphorylate fructose 1,6-bisphosphate (FBP) and inositol-1-phosphate (IMP). However, while possessing a high FBPase activity in vitro, does not participate in gluconeogenesis in vivo. This chain is Fructose-1,6-bisphosphatase/inositol-1-monophosphatase (suhB), found in Thermococcus kodakarensis (strain ATCC BAA-918 / JCM 12380 / KOD1) (Pyrococcus kodakaraensis (strain KOD1)).